Consider the following 311-residue polypeptide: MANPLYQKHIISINDLSRDDLNLVLATAAKLKANPQPELLKHKVIASCFFEASTRTRLSFETSMHRLGASVVGFSDSANTSLGKKGETLADTISVISTYVDAIVMRHPQEGAARLATEFSGQVPVLNAGDGSNQHPTQTLLDLFTIQETQGRLDNLHIAMVGDLKYGRTVHSLTQALAKFSGNRFYFIAPDALAMPQYILDMLDEKGMAWSLHGSIEEVMADVDILYMTRVQKERLDPSEYANVKAQFVLRASDLNGARENMKVLHPLPRIDEITTDVDKTPHAWYFQQAGNGIFARQALLALVLNSELSL.

Carbamoyl phosphate contacts are provided by Arg-55 and Thr-56. Lys-85 contacts L-aspartate. Carbamoyl phosphate-binding residues include Arg-106, His-135, and Gln-138. 2 residues coordinate L-aspartate: Arg-168 and Arg-230. Residues Leu-268 and Pro-269 each contribute to the carbamoyl phosphate site.

This sequence belongs to the aspartate/ornithine carbamoyltransferase superfamily. ATCase family. In terms of assembly, heterododecamer (2C3:3R2) of six catalytic PyrB chains organized as two trimers (C3), and six regulatory PyrI chains organized as three dimers (R2).

The enzyme catalyses carbamoyl phosphate + L-aspartate = N-carbamoyl-L-aspartate + phosphate + H(+). The protein operates within pyrimidine metabolism; UMP biosynthesis via de novo pathway; (S)-dihydroorotate from bicarbonate: step 2/3. Its function is as follows. Catalyzes the condensation of carbamoyl phosphate and aspartate to form carbamoyl aspartate and inorganic phosphate, the committed step in the de novo pyrimidine nucleotide biosynthesis pathway. This is Aspartate carbamoyltransferase catalytic subunit from Salmonella paratyphi A (strain AKU_12601).